A 133-amino-acid polypeptide reads, in one-letter code: Phosphoribosyl-AMP cyclohydrolase (133 aa).

Residue Asp-77 participates in Mg(2+) binding. Cys-78 contacts Zn(2+). Mg(2+)-binding residues include Asp-79 and Asp-81. The Zn(2+) site is built by Cys-95 and Cys-102.

Belongs to the PRA-CH family. Homodimer. Mg(2+) is required as a cofactor. Requires Zn(2+) as cofactor.

The protein resides in the cytoplasm. The enzyme catalyses 1-(5-phospho-beta-D-ribosyl)-5'-AMP + H2O = 1-(5-phospho-beta-D-ribosyl)-5-[(5-phospho-beta-D-ribosylamino)methylideneamino]imidazole-4-carboxamide. It functions in the pathway amino-acid biosynthesis; L-histidine biosynthesis; L-histidine from 5-phospho-alpha-D-ribose 1-diphosphate: step 3/9. Catalyzes the hydrolysis of the adenine ring of phosphoribosyl-AMP. This chain is Phosphoribosyl-AMP cyclohydrolase, found in Azotobacter chroococcum mcd 1.